The sequence spans 332 residues: Ketol-acid reductoisomerase (NADP(+)) (332 aa).

In terms of domain architecture, KARI N-terminal Rossmann spans 1-182 (MAVIYYDKDC…GSNRAGILET (182 aa)). NADP(+) is bound by residues 25–28 (YGAQ) and 83–86 (DTSQ). Residue His-108 is part of the active site. Gly-134 provides a ligand contact to NADP(+). One can recognise a KARI C-terminal knotted domain in the interval 183-328 (TFAEETETDL…AELRSMMSWL (146 aa)). The Mg(2+) site is built by Asp-191, Glu-195, Glu-227, and Glu-231. Substrate is bound at residue Ser-252.

It belongs to the ketol-acid reductoisomerase family. It depends on Mg(2+) as a cofactor.

The enzyme catalyses (2R)-2,3-dihydroxy-3-methylbutanoate + NADP(+) = (2S)-2-acetolactate + NADPH + H(+). It catalyses the reaction (2R,3R)-2,3-dihydroxy-3-methylpentanoate + NADP(+) = (S)-2-ethyl-2-hydroxy-3-oxobutanoate + NADPH + H(+). It functions in the pathway amino-acid biosynthesis; L-isoleucine biosynthesis; L-isoleucine from 2-oxobutanoate: step 2/4. It participates in amino-acid biosynthesis; L-valine biosynthesis; L-valine from pyruvate: step 2/4. In terms of biological role, involved in the biosynthesis of branched-chain amino acids (BCAA). Catalyzes an alkyl-migration followed by a ketol-acid reduction of (S)-2-acetolactate (S2AL) to yield (R)-2,3-dihydroxy-isovalerate. In the isomerase reaction, S2AL is rearranged via a Mg-dependent methyl migration to produce 3-hydroxy-3-methyl-2-ketobutyrate (HMKB). In the reductase reaction, this 2-ketoacid undergoes a metal-dependent reduction by NADPH to yield (R)-2,3-dihydroxy-isovalerate. The sequence is that of Ketol-acid reductoisomerase (NADP(+)) from Dehalococcoides mccartyi (strain ATCC BAA-2100 / JCM 16839 / KCTC 5957 / BAV1).